The sequence spans 222 residues: Thymidylate kinase (222 aa).

Residue 7–14 (GIDGAGKS) participates in ATP binding.

Belongs to the thymidylate kinase family.

It catalyses the reaction dTMP + ATP = dTDP + ADP. In terms of biological role, phosphorylation of dTMP to form dTDP in both de novo and salvage pathways of dTTP synthesis. This chain is Thymidylate kinase, found in Chlorobium chlorochromatii (strain CaD3).